A 102-amino-acid chain; its full sequence is Co-chaperonin GroES (102 aa).

It belongs to the GroES chaperonin family. Heptamer of 7 subunits arranged in a ring. Interacts with the chaperonin GroEL.

It is found in the cytoplasm. In terms of biological role, together with the chaperonin GroEL, plays an essential role in assisting protein folding. The GroEL-GroES system forms a nano-cage that allows encapsulation of the non-native substrate proteins and provides a physical environment optimized to promote and accelerate protein folding. GroES binds to the apical surface of the GroEL ring, thereby capping the opening of the GroEL channel. The chain is Co-chaperonin GroES from Chlamydia muridarum (strain MoPn / Nigg).